Here is a 307-residue protein sequence, read N- to C-terminus: UDP-N-acetylenolpyruvoylglucosamine reductase (307 aa).

Residues 29–197 (RVGGPAEWFA…LSARFRLDPG (169 aa)) form the FAD-binding PCMH-type domain. Arg176 is a catalytic residue. Residue Ser227 is the Proton donor of the active site. Glu297 is a catalytic residue.

The protein belongs to the MurB family. FAD is required as a cofactor.

Its subcellular location is the cytoplasm. The catalysed reaction is UDP-N-acetyl-alpha-D-muramate + NADP(+) = UDP-N-acetyl-3-O-(1-carboxyvinyl)-alpha-D-glucosamine + NADPH + H(+). Its pathway is cell wall biogenesis; peptidoglycan biosynthesis. Functionally, cell wall formation. In Prochlorococcus marinus (strain MIT 9313), this protein is UDP-N-acetylenolpyruvoylglucosamine reductase.